The primary structure comprises 87 residues: NADH-ubiquinone oxidoreductase chain 4L (87 aa).

The next 3 helical transmembrane spans lie at 1–21, 22–42, and 57–77; these read MNLS…NRKN, IILM…LVLI, and LYII…LVAF.

It belongs to the complex I subunit 4L family. In terms of assembly, core subunit of respiratory chain NADH dehydrogenase (Complex I) which is composed of 45 different subunits.

The protein localises to the mitochondrion inner membrane. It catalyses the reaction a ubiquinone + NADH + 5 H(+)(in) = a ubiquinol + NAD(+) + 4 H(+)(out). Functionally, core subunit of the mitochondrial membrane respiratory chain NADH dehydrogenase (Complex I) which catalyzes electron transfer from NADH through the respiratory chain, using ubiquinone as an electron acceptor. This chain is NADH-ubiquinone oxidoreductase chain 4L (ND4L), found in Moniliophthora perniciosa (strain FA553 / isolate CP02) (Witches'-broom disease fungus).